We begin with the raw amino-acid sequence, 689 residues long: Transcription factor BHLH42 (689 aa).

2 disordered regions span residues 192–287 (IDHH…NPRV) and 458–489 (DDNN…ANHV). Positions 206 to 217 (EHSTSNLATSSV) are enriched in polar residues. Residues 246–271 (EEQEQEQEEDEDDDDDDDDEEEAESD) are compositionally biased toward acidic residues. The tract at residues 483–496 (ELSANHVLAERRRR) is basic motif. Residues 483 to 532 (ELSANHVLAERRRREKLNERFIILRSLVPFVTKMDKASILGDTIEYVKQL) enclose the bHLH domain. The segment at 497–532 (EKLNERFIILRSLVPFVTKMDKASILGDTIEYVKQL) is helix-loop-helix motif. The segment at 547-570 (EIDQRSRSSGDPQRSGAKAATDKR) is disordered.

The protein belongs to the bHLH protein family. Interacts with MYB123. Expressed in the inner pericarp of maturing fruits.

It is found in the nucleus. In terms of biological role, transcription activator involved in the spatiotemporal regulation of anthocyanin biosynthesis specifically in the inner pericarp of red-fleshed kiwifruits. Functions in association with MYB123 to activate the promoters of LDOX (ANS) and F3GT1 that encode the dedicated enzymes for anthocyanin biosynthesis. The polypeptide is Transcription factor BHLH42 (Actinidia chinensis var. chinensis (Chinese soft-hair kiwi)).